A 185-amino-acid polypeptide reads, in one-letter code: Elongation factor P (185 aa).

The protein belongs to the elongation factor P family.

The protein resides in the cytoplasm. Its pathway is protein biosynthesis; polypeptide chain elongation. Its function is as follows. Involved in peptide bond synthesis. Stimulates efficient translation and peptide-bond synthesis on native or reconstituted 70S ribosomes in vitro. Probably functions indirectly by altering the affinity of the ribosome for aminoacyl-tRNA, thus increasing their reactivity as acceptors for peptidyl transferase. The chain is Elongation factor P from Alkaliphilus metalliredigens (strain QYMF).